The sequence spans 357 residues: Non-structural protein NS2 (357 aa).

Disordered regions lie at residues 163-199 and 228-267; these read NERE…AREM and LDEK…PKTH. 2 stretches are compositionally biased toward acidic residues: residues 230 to 241 and 250 to 260; these read EKDEEDGDERED and DDDEQGEDASD.

It belongs to the orbivirus non-structural protein NS2 family.

Functionally, single-stranded RNA-binding protein. In Antilocapra americana (Pronghorn), this protein is Non-structural protein NS2 (Segment-8).